Reading from the N-terminus, the 95-residue chain is Small ribosomal subunit protein uS17 (95 aa).

Belongs to the universal ribosomal protein uS17 family. Part of the 30S ribosomal subunit.

Functionally, one of the primary rRNA binding proteins, it binds specifically to the 5'-end of 16S ribosomal RNA. The protein is Small ribosomal subunit protein uS17 of Mycoplasmopsis synoviae (strain 53) (Mycoplasma synoviae).